A 140-amino-acid polypeptide reads, in one-letter code: FAD synthase (140 aa).

Residues 10-11, 15-18, and N93 contribute to the ATP site; these read TF and HPGH.

The protein belongs to the archaeal FAD synthase family. As to quaternary structure, homodimer. It depends on a divalent metal cation as a cofactor.

It catalyses the reaction FMN + ATP + H(+) = FAD + diphosphate. Its pathway is cofactor biosynthesis; FAD biosynthesis; FAD from FMN: step 1/1. Functionally, catalyzes the transfer of the AMP portion of ATP to flavin mononucleotide (FMN) to produce flavin adenine dinucleotide (FAD) coenzyme. The protein is FAD synthase of Methanocella arvoryzae (strain DSM 22066 / NBRC 105507 / MRE50).